Reading from the N-terminus, the 329-residue chain is MVKAKSWTLKKHFQGKPTQSDFELKTVELPPLKNGEVLLEALFLSVDPYMRIASKRLKEGAVMMGQQVARVVESKNSAFPAGSIVLAQSGWTTHFISDGKGLEKLLTEWPDKLPLSLALGTIGMPGLTAYFGLLEVCGVKGGETVLVSAAAGAVGSVVGQIAKLKGCKVVGAAGSDEKIAYLKQIGFDAAFNYKTVNSLEEALKKASPDGYDCYFDNVGGEFLNTVLSQMKDFGKIAICGAISVYNRMDQLPPGPSPESIIYKQLRIEGFIVYRWQGDVREKALRDLMKWVLEGKIQYHEHVTKGFENMPAAFIEMLNGANLGKAVVTA.

T18 bears the Phosphothreonine mark. S20 carries the post-translational modification Phosphoserine. NADP(+) is bound by residues 152-155 (GAVG), K178, Y193, N217, 239-245 (CGAISVY), 270-272 (FIV), and N321. Residue K178 is modified to N6-(2-hydroxyisobutyryl)lysine; alternate. An N6-acetyllysine; alternate modification is found at K178.

It belongs to the NADP-dependent oxidoreductase L4BD family. In terms of assembly, monomer or homodimer. As to expression, detected in small intestine, kidney, liver, spleen and stomach (at protein level). Detected in small intestine, kidney and liver.

The protein localises to the cytoplasm. The enzyme catalyses 13,14-dihydro-15-oxo-prostaglandin E1 + NADP(+) = 15-oxoprostaglandin E1 + NADPH + H(+). The catalysed reaction is 13,14-dihydro-15-oxo-prostaglandin E2 + NAD(+) = 15-oxoprostaglandin E2 + NADH + H(+). It carries out the reaction 13,14-dihydro-15-oxo-prostaglandin F1alpha + NADP(+) = 15-oxoprostaglandin F1alpha + NADPH + H(+). It catalyses the reaction 13,14-dihydro-15-oxo-PGF2alpha + NADP(+) = 15-oxoprostaglandin F2alpha + NADPH + H(+). The enzyme catalyses leukotriene B4 + NADP(+) = 12-oxo-leukotriene B4 + NADPH + H(+). The catalysed reaction is 20-hydroxy-leukotriene B4 + NADP(+) = 12-oxo-20-hydroxy-leukotriene B4 + NADPH + H(+). It carries out the reaction 6-trans-leukotriene B4 + NADP(+) = 12-oxo-(5S)-hydroxy-(6E,8E,10E,14Z)-eicosatetraenoate + NADPH + H(+). It catalyses the reaction (5S,12S)-dihydroxy-(6E,10E,12E,14Z)-eicosatetraenoate + NADP(+) = 12-oxo-(5S)-hydroxy-(6E,8E,10E,14Z)-eicosatetraenoate + NADPH + H(+). The enzyme catalyses an n-alkanal + NADP(+) = an alk-2-enal + NADPH + H(+). The catalysed reaction is hexanal + NADP(+) = (E)-hex-2-enal + NADPH + H(+). It carries out the reaction octanal + NADP(+) = (2E)-octenal + NADPH + H(+). It catalyses the reaction decanal + NADP(+) = (2E)-decenal + NADPH + H(+). The enzyme catalyses dodecanal + NADP(+) = (2E)-dodecenal + NADPH + H(+). The catalysed reaction is 4-hydroxynonanal + NADP(+) = (E)-4-hydroxynon-2-enal + NADPH + H(+). It carries out the reaction pentan-2-one + NADP(+) = (E)-pent-3-en-2-one + NADPH + H(+). It catalyses the reaction nonan-2-one + NADP(+) = (3E)-nonen-2-one + NADPH + H(+). Its function is as follows. NAD(P)H-dependent oxidoreductase involved in metabolic inactivation of pro- and anti-inflammatory eicosanoids: prostaglandins (PG), leukotrienes (LT) and lipoxins (LX). Catalyzes with high efficiency the reduction of the 13,14 double bond of 15-oxoPGs, including 15-oxo-PGE1, 15-oxo-PGE2, 15-oxo-PGF1-alpha and 15-oxo-PGF2-alpha. Catalyzes with lower efficiency the oxidation of the hydroxyl group at C12 of LTB4 and its derivatives, converting them into biologically less active 12-oxo-LTB4 metabolites. Reduces 15-oxo-LXA4 to 13,14 dihydro-15-oxo-LXA4, enhancing neutrophil recruitment at the inflammatory site. Plays a role in metabolic detoxification of alkenals and ketones. Reduces alpha,beta-unsaturated alkenals and ketones, particularly those with medium-chain length, showing highest affinity toward (2E)-decenal and (3E)-3-nonen-2-one. May inactivate 4-hydroxy-2-nonenal, a cytotoxic lipid constituent of oxidized low-density lipoprotein particles. The sequence is that of Prostaglandin reductase 1 (Ptgr1) from Cavia porcellus (Guinea pig).